The following is a 228-amino-acid chain: Lipoprotein-releasing system ATP-binding protein LolD (228 aa).

In terms of domain architecture, ABC transporter spans 8 to 228 (LQAKKLVKAY…ELHDGLLRRL (221 aa)). 44 to 51 (GASGSGKS) contacts ATP.

Belongs to the ABC transporter superfamily. Lipoprotein translocase (TC 3.A.1.125) family. In terms of assembly, the complex is composed of two ATP-binding proteins (LolD) and two transmembrane proteins (LolC and LolE).

It localises to the cell inner membrane. Functionally, part of the ABC transporter complex LolCDE involved in the translocation of mature outer membrane-directed lipoproteins, from the inner membrane to the periplasmic chaperone, LolA. Responsible for the formation of the LolA-lipoprotein complex in an ATP-dependent manner. The sequence is that of Lipoprotein-releasing system ATP-binding protein LolD from Alcanivorax borkumensis (strain ATCC 700651 / DSM 11573 / NCIMB 13689 / SK2).